Reading from the N-terminus, the 826-residue chain is Ribonucleoside-diphosphate reductase large subunit (826 aa).

Substrate contacts are provided by residues Thr171, 186 to 187 (SC), Gly217, 387 to 391 (NLCAE), and 594 to 598 (PTSGC). A disulfide bridge links Cys187 with Cys403. Asn387 acts as the Proton acceptor in catalysis. The Cysteine radical intermediate role is filled by Cys389. The Proton acceptor role is filled by Glu391. Residues 747–769 (SVPREEQNERSPAEQMPPRPMEP) are disordered. A compositionally biased stretch (basic and acidic residues) spans 749-758 (PREEQNERSP).

The protein belongs to the ribonucleoside diphosphate reductase large chain family. Heterotetramer composed of a homodimer of the large subunit (R1) and a homodimer of the small subunit (R2). Larger multisubunit protein complex are also active, composed of (R1)n(R2)n.

It catalyses the reaction a 2'-deoxyribonucleoside 5'-diphosphate + [thioredoxin]-disulfide + H2O = a ribonucleoside 5'-diphosphate + [thioredoxin]-dithiol. In terms of biological role, ribonucleoside-diphosphate reductase holoenzyme provides the precursors necessary for viral DNA synthesis. Allows virus growth in non-dividing cells, as well as reactivation from latency in infected hosts. Catalyzes the biosynthesis of deoxyribonucleotides from the corresponding ribonucleotides. The protein is Ribonucleoside-diphosphate reductase large subunit of Homo sapiens (Human).